The chain runs to 95 residues: Small ribosomal subunit protein bS6 (95 aa).

It belongs to the bacterial ribosomal protein bS6 family.

Its function is as follows. Binds together with bS18 to 16S ribosomal RNA. This is Small ribosomal subunit protein bS6 from Corynebacterium kroppenstedtii (strain DSM 44385 / JCM 11950 / CIP 105744 / CCUG 35717).